The primary structure comprises 98 residues: NADH-ubiquinone oxidoreductase chain 4L (98 aa).

Helical transmembrane passes span 1–21, 29–49, and 61–81; these read MTLI…GLLM, ALLC…LTIL, and IILL…LVMV.

This sequence belongs to the complex I subunit 4L family. In terms of assembly, core subunit of respiratory chain NADH dehydrogenase (Complex I) which is composed of 45 different subunits.

It is found in the mitochondrion inner membrane. It carries out the reaction a ubiquinone + NADH + 5 H(+)(in) = a ubiquinol + NAD(+) + 4 H(+)(out). In terms of biological role, core subunit of the mitochondrial membrane respiratory chain NADH dehydrogenase (Complex I) which catalyzes electron transfer from NADH through the respiratory chain, using ubiquinone as an electron acceptor. Part of the enzyme membrane arm which is embedded in the lipid bilayer and involved in proton translocation. This is NADH-ubiquinone oxidoreductase chain 4L (MT-ND4L) from Balaenoptera omurai (Omura's baleen whale).